A 527-amino-acid polypeptide reads, in one-letter code: Probable malate:quinone oxidoreductase (527 aa).

It belongs to the MQO family. FAD is required as a cofactor.

It catalyses the reaction (S)-malate + a quinone = a quinol + oxaloacetate. It functions in the pathway carbohydrate metabolism; tricarboxylic acid cycle; oxaloacetate from (S)-malate (quinone route): step 1/1. In Pectobacterium atrosepticum (strain SCRI 1043 / ATCC BAA-672) (Erwinia carotovora subsp. atroseptica), this protein is Probable malate:quinone oxidoreductase.